A 118-amino-acid polypeptide reads, in one-letter code: Large ribosomal subunit protein bL20 (118 aa).

It belongs to the bacterial ribosomal protein bL20 family.

Binds directly to 23S ribosomal RNA and is necessary for the in vitro assembly process of the 50S ribosomal subunit. It is not involved in the protein synthesizing functions of that subunit. The protein is Large ribosomal subunit protein bL20 of Rhodopirellula baltica (strain DSM 10527 / NCIMB 13988 / SH1).